The chain runs to 160 residues: Putative lipoprotein YfiB (160 aa).

The signal sequence occupies residues 1 to 18; that stretch reads MIKHLVAPLVFTSLILTG. C19 is lipidated: N-palmitoyl cysteine. The S-diacylglycerol cysteine moiety is linked to residue C19. The OmpA-like domain occupies 43–160; the sequence is AGDWSLGLSD…RRVAVVITTP (118 aa).

It belongs to the outer membrane OOP (TC 1.B.6) superfamily.

It is found in the cell membrane. The polypeptide is Putative lipoprotein YfiB (yfiB) (Escherichia coli (strain K12)).